The primary structure comprises 114 residues: Endoribonuclease MazF2 (114 aa).

The protein belongs to the PemK/MazF family. As to quaternary structure, probably forms a complex with cognate antitoxin MazE2.

Toxic component of a type II toxin-antitoxin (TA) system. Acts as an endoribonuclease on single-strand RNA, cleaving between the second and third bases in the sequences CUCCU and UUCCU. Neutralized by coexpression with cognate antitoxin MazE2. This is Endoribonuclease MazF2 (mazF2) from Mycobacterium bovis (strain ATCC BAA-935 / AF2122/97).